A 157-amino-acid polypeptide reads, in one-letter code: 2-C-methyl-D-erythritol 2,4-cyclodiphosphate synthase (157 aa).

Residues Asp8 and His10 each coordinate a divalent metal cation. 4-CDP-2-C-methyl-D-erythritol 2-phosphate-binding positions include Asp8–His10 and His34–Ser35. His42 contacts a divalent metal cation. 4-CDP-2-C-methyl-D-erythritol 2-phosphate is bound by residues Asp56–Gly58, Phe61–Asp65, Ala100–Ala106, Thr132–Glu135, Phe139, and Arg142.

It belongs to the IspF family. In terms of assembly, homotrimer. A divalent metal cation is required as a cofactor.

It carries out the reaction 4-CDP-2-C-methyl-D-erythritol 2-phosphate = 2-C-methyl-D-erythritol 2,4-cyclic diphosphate + CMP. It functions in the pathway isoprenoid biosynthesis; isopentenyl diphosphate biosynthesis via DXP pathway; isopentenyl diphosphate from 1-deoxy-D-xylulose 5-phosphate: step 4/6. Its function is as follows. Involved in the biosynthesis of isopentenyl diphosphate (IPP) and dimethylallyl diphosphate (DMAPP), two major building blocks of isoprenoid compounds. Catalyzes the conversion of 4-diphosphocytidyl-2-C-methyl-D-erythritol 2-phosphate (CDP-ME2P) to 2-C-methyl-D-erythritol 2,4-cyclodiphosphate (ME-CPP) with a corresponding release of cytidine 5-monophosphate (CMP). This chain is 2-C-methyl-D-erythritol 2,4-cyclodiphosphate synthase, found in Pseudomonas syringae pv. syringae (strain B728a).